A 320-amino-acid chain; its full sequence is Probable L,D-transpeptidase YcfS (320 aa).

The signal sequence occupies residues 1-23 (MMIKTRFSRWLTFFTFAAAVALA). In terms of domain architecture, LysM spans 45 to 90 (KFHVVENDGGSLEAIAKKYNVGFLALLQANPGVDPYVPRAGSVLTI). Residues 102–241 (EGIVINIAEL…VTPGTKVNII (140 aa)) form the L,D-TPase catalytic domain. His201 functions as the Proton donor/acceptor in the catalytic mechanism. Cys217 serves as the catalytic Nucleophile.

This sequence belongs to the YkuD family. As to quaternary structure, interacts with DsbG.

The protein localises to the periplasm. The protein operates within cell wall biogenesis; peptidoglycan biosynthesis. In terms of biological role, responsible, at least in part, for anchoring of the major outer membrane lipoprotein (Lpp, also known as the Braun lipoprotein) to the peptidoglycan via a meso-diaminopimelyl-L-Lys- bond on the terminal residue of Lpp. The sequence is that of Probable L,D-transpeptidase YcfS (ycfS) from Escherichia coli (strain K12).